A 193-amino-acid polypeptide reads, in one-letter code: MMINIQEDKLVSAHDAEEFLRFFNSGDEALQQEATTLLTREAHLLDIQAYRAWLEHCVDSEVKYQIISRELRSASERRYQLNETMNIFNENYEQLEVRVAHQLDPQNWGNSPKVRFTRFITNIQAAMDENEDLLHIRSNLIVHRARRGNQVDVFYATREDKWKRGEDGARKLVQRLIDYPERTFQTHNVMIFM.

It belongs to the bacterial ring-hydroxylating dioxygenase beta subunit family. The naphthalene dioxygenase (NDO) multicomponent enzyme system is composed of an electron transfer component and a dioxygenase component (iron sulfur protein (ISP)). The electron transfer component is composed of a ferredoxin reductase (NdoR) and a ferredoxin (NdoA), and the dioxygenase component is formed of a heterohexamer (trimer of heterodimers) of three large alpha subunits (NdoB) and three small beta subunits (NdoC).

Its pathway is aromatic compound metabolism; naphthalene degradation. In terms of biological role, component of the naphthalene dioxygenase (NDO) multicomponent enzyme system which catalyzes the incorporation of both atoms of molecular oxygen into naphthalene to form cis-(1R,2S)-dihydroxy-1,2-dihydronaphthalene. The beta subunit seems to have a structural role in the holoenzyme. The sequence is that of Naphthalene 1,2-dioxygenase system, small oxygenase component from Pseudomonas aeruginosa.